A 493-amino-acid polypeptide reads, in one-letter code: Leucine-rich repeat-containing protein 14 (493 aa).

The LRR 1; degenerate repeat unit spans residues 111 to 146 (KHALRVLDMTGLLDDGVEQDPETMSMWDCTAAVART). One copy of the LRR 2; degenerate repeat lies at 194 to 218 (RLCCRDLRAEDLPMRNTVALLQLLD). The stretch at 219 to 246 (AGCLRRIDLRFNNLGLRGLSVIIPHVAR) is one LRR 3; degenerate repeat. An LRR 4; degenerate repeat occupies 247–282 (FQHLASLRLHYVHGDSRQPSVDGEDNFRYFLAQMGR). LRR repeat units lie at residues 283–307 (FMCL…LSTL), 308–339 (QRPL…AHLK), 340–360 (KLDL…QGLL), 364–391 (ATTL…TLTR), and 392–416 (CASL…LLRD).

Belongs to the PRAME family. LRRC14 subfamily. As to quaternary structure, interacts with IKBKB; disrupts IKBKB-IKBKG interaction preventing I-kappa-B-kinase (IKK) core complex formation and leading to a decrease of IKBKB phosphorylation and NF-kappaB activation. Interacts with CHUK.

Its subcellular location is the cytoplasm. Functionally, negatively regulates Toll-like receptor-mediated NF-kappa-B signaling by disrupting IKK core complex formation through interaction with IKBKB. This chain is Leucine-rich repeat-containing protein 14, found in Mus musculus (Mouse).